A 163-amino-acid chain; its full sequence is uncharacterized protein (163 aa).

A compositionally biased stretch (basic and acidic residues) spans 1–10 (MTHPLPHDSH). 2 disordered regions span residues 1 to 21 (MTHP…VNKS) and 71 to 112 (SKQP…EQRR). Polar residues predominate over residues 90 to 105 (PASSLQDHSRLTSLSR).

This is an uncharacterized protein from Homo sapiens (Human).